We begin with the raw amino-acid sequence, 274 residues long: Large ribosomal subunit protein uL2 (274 aa).

Residues 224-256 (VMNPVDHPHGGGEGKTGEGRHPVDPWGNLTKGY) form a disordered region. Residues 229 to 246 (DHPHGGGEGKTGEGRHPV) show a composition bias toward basic and acidic residues.

Belongs to the universal ribosomal protein uL2 family. As to quaternary structure, part of the 50S ribosomal subunit. Forms a bridge to the 30S subunit in the 70S ribosome.

In terms of biological role, one of the primary rRNA binding proteins. Required for association of the 30S and 50S subunits to form the 70S ribosome, for tRNA binding and peptide bond formation. It has been suggested to have peptidyltransferase activity; this is somewhat controversial. Makes several contacts with the 16S rRNA in the 70S ribosome. This chain is Large ribosomal subunit protein uL2, found in Polaromonas naphthalenivorans (strain CJ2).